Consider the following 322-residue polypeptide: MEADLSGFNIDAPRWDQRTFLGRVKHFLNITDPRTVFVSERELDWAKVMVEKSRMGVVPPGTQVEQLLYAKKLYDSAFHPDTGEKMNVIGRMSFQLPGGMIITGFMLQFYRTMPAVIFWQWVNQSFNALVNYTNRNAASPTSVRQMALSYFTATTTAVATAVGMNMLTKKAPPLVGRWVPFAAVAAANCVNIPMMRQQELIKGICVKDRNENEIGHSRRAAAIGITQVVISRITMSAPGMILLPVIMERLEKLHFMQKVKVLHAPLQVMLSGCFLIFMVPVACGLFPQKCELPVSYLEPKLQDTIKAKYGELEPYVYFNKGL.

Met1 is modified (N-acetylmethionine). The next 5 helical transmembrane spans lie at 100 to 122, 142 to 164, 174 to 192, 228 to 250, and 265 to 287; these read MIIT…WQWV, SVRQ…AVGM, LVGR…CVNI, VVIS…MERL, and PLQV…GLFP.

It belongs to the sideroflexin family. Widely expressed, highest levels in kidney, liver, and pancreas.

The protein resides in the mitochondrion inner membrane. The protein localises to the mitochondrion outer membrane. It carries out the reaction L-serine(in) = L-serine(out). Functionally, mitochondrial amino-acid transporter that mediates transport of serine into mitochondria. Involved in mitochondrial iron homeostasis by regulating heme biosynthesis. The protein is Sideroflexin-2 of Homo sapiens (Human).